Consider the following 63-residue polypeptide: Large ribosomal subunit protein uL29 (63 aa).

It belongs to the universal ribosomal protein uL29 family.

The sequence is that of Large ribosomal subunit protein uL29 from Shewanella denitrificans (strain OS217 / ATCC BAA-1090 / DSM 15013).